The sequence spans 209 residues: Eukaryotic translation initiation factor isoform 4E-2 (209 aa).

Residues 1 to 29 (MAEVEAALPVAATETPEVAAEGDAGAAEA) are disordered. Residues 9-29 (PVAATETPEVAAEGDAGAAEA) show a composition bias toward low complexity. Residues 51-56 (PGAAWG), Lys83, and 101-102 (WE) each bind mRNA. Cysteines 106 and 145 form a disulfide. Residues 152-157 (RQRQDK) and 197-200 (RSQK) each bind mRNA.

The protein belongs to the eukaryotic initiation factor 4E family. As to quaternary structure, EIF4F is a multi-subunit complex, the composition of which varies with external and internal environmental conditions. It is composed of at least EIF4A, EIF4E and EIF4G. EIF4E is also known to interact with other partners. In higher plants two isoforms of EIF4F have been identified, named isoform EIF4F and isoform EIF(iso)4F. Isoform EIF4F has subunits p220 and p26, whereas isoform EIF(iso)4F has subunits p82 and p28. According to the redox status, the Cys-106-Cys-145 disulfide bridge may have a role in regulating protein function by affecting its ability to bind capped mRNA.

The protein resides in the cytoplasm. Its subcellular location is the nucleus. Component of the protein complex eIF4F, which is involved in the recognition of the mRNA cap, ATP-dependent unwinding of 5'-terminal secondary structure and recruitment of mRNA to the ribosome. Recognizes and binds the 7-methylguanosine-containing mRNA cap during an early step in the initiation of protein synthesis and facilitates ribosome binding by inducing the unwinding of the mRNAs secondary structures. The sequence is that of Eukaryotic translation initiation factor isoform 4E-2 from Triticum aestivum (Wheat).